The sequence spans 151 residues: Cardio acceleratory peptide 2b (151 aa).

The N-terminal stretch at 1-21 (MKSMLVHIVLVIFIIAEFSTA) is a signal peptide. The propeptide occupies 22–28 (ETDHDKN). Val42 carries the valine amide modification. Residues 45-80 (SDPSLANSLRDGLEAGVLDGIYGDASQEDYNEADFQ) constitute a propeptide that is removed on maturation. Val92 is modified (valine amide). The propeptide occupies 95–113 (GDAELRKWAHLLALQQVLD). Position 130 is a leucine amide (Leu130). Positions 134-151 (SVDAKSFADISKGQKELN) are excised as a propeptide.

It belongs to the pyrokinin family. In terms of tissue distribution, in larvae, the precursor peptide is exclusively present in a single pair of neuroendocrine cells in the labial neuromere (subesophageal ganglion) and three pairs of cells in the ventral ganglion abdominal neuromeres.

It is found in the secreted. Its function is as follows. CAP-1 and CAP-2, but not CAP-3 are ligands for the Capa receptor. CAP-1 and CAP-2 are probably components of the signal transduction pathway that leads to Malpighian tubule fluid secretion via the second messenger nitric oxide. CAP-3 is a ligand for the PK1-R G-protein coupled receptor. The chain is Cardio acceleratory peptide 2b (Capa) from Drosophila melanogaster (Fruit fly).